A 120-amino-acid polypeptide reads, in one-letter code: Small ribosomal subunit protein uS13m (120 aa).

The protein belongs to the universal ribosomal protein uS13 family. Part of the small ribosomal subunit.

Its subcellular location is the mitochondrion. Its function is as follows. Located at the top of the head of the small subunit, it contacts several helices of the 18S rRNA. The polypeptide is Small ribosomal subunit protein uS13m (RPS13) (Marchantia polymorpha (Common liverwort)).